We begin with the raw amino-acid sequence, 89 residues long: Small ribosomal subunit protein bS20 (89 aa).

Belongs to the bacterial ribosomal protein bS20 family.

In terms of biological role, binds directly to 16S ribosomal RNA. The sequence is that of Small ribosomal subunit protein bS20 from Xanthobacter autotrophicus (strain ATCC BAA-1158 / Py2).